The sequence spans 133 residues: MIVGIGSDLIDIRRVEKALERHGERFTHRVFTEVERVKSDRRRMRAASYAKRFAAKEACAKALGTGLAQGVFWRDMGVVNLPGGKPTMHLTGGAAERLNALIPAGHRPLIHLTITDDFPLAQAFVIIEAVSVE.

Positions 8 and 57 each coordinate Mg(2+).

It belongs to the P-Pant transferase superfamily. AcpS family. It depends on Mg(2+) as a cofactor.

The protein resides in the cytoplasm. It catalyses the reaction apo-[ACP] + CoA = holo-[ACP] + adenosine 3',5'-bisphosphate + H(+). Transfers the 4'-phosphopantetheine moiety from coenzyme A to a Ser of acyl-carrier-protein. This chain is Holo-[acyl-carrier-protein] synthase, found in Chelativorans sp. (strain BNC1).